We begin with the raw amino-acid sequence, 346 residues long: Beta-hexosaminidase (346 aa).

Substrate is bound by residues D62, R70, R134, and 164 to 165; that span reads KH. The Proton donor/acceptor role is filled by H177. The active-site Nucleophile is D249.

Belongs to the glycosyl hydrolase 3 family. NagZ subfamily.

Its subcellular location is the cytoplasm. The enzyme catalyses Hydrolysis of terminal non-reducing N-acetyl-D-hexosamine residues in N-acetyl-beta-D-hexosaminides.. Its pathway is cell wall biogenesis; peptidoglycan recycling. Functionally, plays a role in peptidoglycan recycling by cleaving the terminal beta-1,4-linked N-acetylglucosamine (GlcNAc) from peptide-linked peptidoglycan fragments, giving rise to free GlcNAc, anhydro-N-acetylmuramic acid and anhydro-N-acetylmuramic acid-linked peptides. The chain is Beta-hexosaminidase from Actinobacillus succinogenes (strain ATCC 55618 / DSM 22257 / CCUG 43843 / 130Z).